A 189-amino-acid polypeptide reads, in one-letter code: Protein Flattop (189 aa).

The tract at residues 112–189 (EISGKPFDPD…PPPSPCKSTK (78 aa)) is disordered. A compositionally biased stretch (polar residues) spans 137–148 (APNPTIIPSSPV). A compositionally biased stretch (pro residues) spans 178-189 (NNPPPSPCKSTK).

Belongs to the Flattop family. Microtubule inner protein component of sperm flagellar doublet microtubules. Interacts with DLG3. Expressed in mono- and multiciliated tissues during planar cell polarity acquisition.

It is found in the cytoplasm. The protein localises to the cytoskeleton. It localises to the cilium basal body. Its subcellular location is the cilium axoneme. The protein resides in the flagellum axoneme. It is found in the apical cell membrane. Microtubule inner protein (MIP) part of the dynein-decorated doublet microtubules (DMTs) in cilia axoneme. Acts as a regulator of cilium basal body docking and positioning in mono- and multiciliated cells. Regulates basal body docking and cilia formation in multiciliated lung cells. Regulates kinocilium positioning and stereocilia bundle morphogenesis in the inner ear. The sequence is that of Protein Flattop from Mus musculus (Mouse).